Reading from the N-terminus, the 46-residue chain is MEKIKKSYLLVAKLKFKYFCLKPYSLNSTTKFILKIIKNKSMLIFN.

It localises to the plastid. It is found in the chloroplast. This is an uncharacterized protein from Trieres chinensis (Marine centric diatom).